Reading from the N-terminus, the 343-residue chain is MNNAIILGIIWHLVGAASAACFYAPFKQVKKWSWETMWSIGGLVSWLILPWTVSYLLLPDFWQYYGSFSIATLLPVFLFGAMWGIGNINYGLTMRYLGMSMGIGIAIGITLIIGTLMTPILQGRFDVLLGTPGGRMTLLGVFVALIGVAIVSYAGLLKERAMGIQAEEFNLKKGLILAVMCGIFSAGMSFAMDAAKPMHEAASALGINSLYVALPSYVIIMGGGAIINLSYCFIRLATLKNLSVKADFSVAKPLLITNILFSALAGLMWYLQFFYAWGHAKIPQQYDYMSWMLHMSFYVLCGGIVGLLLKEWKCSTKKPVAVLCIGCLVIILAANIVGLGMAA.

A run of 10 helical transmembrane segments spans residues 4-24, 38-58, 68-88, 101-121, 137-157, 175-195, 207-227, 254-274, 289-309, and 320-340; these read AIILGIIWHLVGAASAACFYA, WSIGGLVSWLILPWTVSYLLL, FSIATLLPVFLFGAMWGIGNI, MGIGIAIGITLIIGTLMTPIL, TLLGVFVALIGVAIVSYAGLL, LILAVMCGIFSAGMSFAMDAA, INSLYVALPSYVIIMGGGAII, LLITNILFSALAGLMWYLQFF, MSWMLHMSFYVLCGGIVGLLL, and VAVLCIGCLVIILAANIVGLG.

The protein belongs to the L-rhamnose transporter (TC 2.A.7.6) family.

Its subcellular location is the cell inner membrane. It catalyses the reaction L-rhamnopyranose(in) + H(+)(in) = L-rhamnopyranose(out) + H(+)(out). Its function is as follows. Uptake of L-rhamnose across the cytoplasmic membrane with the concomitant transport of protons into the cell (symport system). This Yersinia pestis bv. Antiqua (strain Antiqua) protein is L-rhamnose-proton symporter.